Consider the following 51-residue polypeptide: Insulin (51 aa).

Cystine bridges form between cysteine 7/cysteine 37, cysteine 19/cysteine 50, and cysteine 36/cysteine 41.

Belongs to the insulin family. Heterodimer of a B chain and an A chain linked by two disulfide bonds.

It localises to the secreted. Its function is as follows. Insulin decreases blood glucose concentration. It increases cell permeability to monosaccharides, amino acids and fatty acids. It accelerates glycolysis, the pentose phosphate cycle, and glycogen synthesis in liver. In Meleagris gallopavo (Wild turkey), this protein is Insulin (INS).